A 261-amino-acid polypeptide reads, in one-letter code: 5'-nucleotidase SurE (261 aa).

A divalent metal cation is bound by residues Asp8, Asp9, Ser39, and Asn91.

The protein belongs to the SurE nucleotidase family. It depends on a divalent metal cation as a cofactor.

The protein localises to the cytoplasm. It carries out the reaction a ribonucleoside 5'-phosphate + H2O = a ribonucleoside + phosphate. Its function is as follows. Nucleotidase that shows phosphatase activity on nucleoside 5'-monophosphates. The chain is 5'-nucleotidase SurE from Polaromonas sp. (strain JS666 / ATCC BAA-500).